Consider the following 320-residue polypeptide: Putative olfactory receptor 2W5 pseudogene (320 aa).

An N-linked (GlcNAc...) asparagine glycan is attached at asparagine 5. A run of 4 helical transmembrane segments spans residues 30–50 (VILI…LLLV), 58–78 (PMYF…ASIA), 98–118 (VAQL…LVVM), and 140–160 (LCLQ…FIMC). A disulfide bridge links cysteine 97 with cysteine 179. Positions 267–320 (LPRSGEVPDSLLHHRHSQHQPPHLHFEEQGCEGDHEETSGVGERGWGASTRGTL) are disordered. The span at 290-304 (LHFEEQGCEGDHEET) shows a compositional bias: basic and acidic residues.

The protein belongs to the G-protein coupled receptor 1 family.

The protein resides in the cell membrane. Odorant receptor. This chain is Putative olfactory receptor 2W5 pseudogene, found in Homo sapiens (Human).